Consider the following 136-residue polypeptide: Protein NrdI (136 aa).

It belongs to the NrdI family.

Its function is as follows. Probably involved in ribonucleotide reductase function. The sequence is that of Protein NrdI from Escherichia coli O127:H6 (strain E2348/69 / EPEC).